A 25-amino-acid chain; its full sequence is Small ribosomal subunit protein eS32B (25 aa).

The segment at 1–25 is disordered; that stretch reads MRAKWRKKRTRRLKRKRRKVRARSK.

Belongs to the eukaryotic ribosomal protein eS32 family. In terms of assembly, component of the small ribosomal subunit (SSU). Mature yeast ribosomes consist of a small (40S) and a large (60S) subunit. The 40S small subunit contains 1 molecule of ribosomal RNA (18S rRNA) and 33 different proteins (encoded by 57 genes). The large 60S subunit contains 3 rRNA molecules (25S, 5.8S and 5S rRNA) and 46 different proteins (encoded by 81 genes).

It localises to the cytoplasm. Its function is as follows. Component of the ribosome, a large ribonucleoprotein complex responsible for the synthesis of proteins in the cell. The small ribosomal subunit (SSU) binds messenger RNAs (mRNAs) and translates the encoded message by selecting cognate aminoacyl-transfer RNA (tRNA) molecules. The large subunit (LSU) contains the ribosomal catalytic site termed the peptidyl transferase center (PTC), which catalyzes the formation of peptide bonds, thereby polymerizing the amino acids delivered by tRNAs into a polypeptide chain. The nascent polypeptides leave the ribosome through a tunnel in the LSU and interact with protein factors that function in enzymatic processing, targeting, and the membrane insertion of nascent chains at the exit of the ribosomal tunnel. This Saccharomyces cerevisiae (strain ATCC 204508 / S288c) (Baker's yeast) protein is Small ribosomal subunit protein eS32B.